We begin with the raw amino-acid sequence, 408 residues long: Sporulation integral membrane protein YlbJ (408 aa).

8 helical membrane passes run 6–26 (INTL…ISHP), 43–63 (VVFP…GFGI), 81–101 (VPGV…PAGA), 131–151 (LFIF…GILL), 214–234 (VTSS…FSVF), 294–314 (IIVS…VAGI), 324–344 (PFFI…MLLW), and 377–397 (LLVQ…IIIF).

The protein localises to the cell membrane. In terms of biological role, required for spore cortex formation. The protein is Sporulation integral membrane protein YlbJ (ylbJ) of Bacillus subtilis (strain 168).